Consider the following 215-residue polypeptide: MDKVQSGFLILFLFLMECQLHLCLPYADGLHPTGNITGLPGSKRSQPPRNITKEPKVFFHKTQLPGIQGAASRSTAASPTNPMKFLRNKAIIRHRPALVKVILISSVAFSIALICGMAISYMIYRLAQAEERQQLESLYKNLRIPLLGDEEEGSEDEGESTHLLPENENELEKFIHSVIISKRSKNIKKKLKEEQNSVTENKTKNASHNGKMEDL.

Positions 1–29 are cleaved as a signal peptide; it reads MDKVQSGFLILFLFLMECQLHLCLPYADG. At 30-100 the chain is on the extracellular side; sequence LHPTGNITGL…IIRHRPALVK (71 aa). Residues 101–121 form a helical membrane-spanning segment; that stretch reads VILISSVAFSIALICGMAISY. The Cytoplasmic portion of the chain corresponds to 122–215; that stretch reads MIYRLAQAEE…ASHNGKMEDL (94 aa). Residues 191–215 are disordered; sequence LKEEQNSVTENKTKNASHNGKMEDL. Residues 196-208 show a composition bias toward polar residues; it reads NSVTENKTKNASH.

It localises to the membrane. This is an uncharacterized protein from Homo sapiens (Human).